A 368-amino-acid polypeptide reads, in one-letter code: D-alanine--D-alanine ligase (368 aa).

The ATP-grasp domain occupies lysine 151 to aspartate 358. Arginine 179–glutamate 234 lines the ATP pocket. Residues aspartate 313, glutamate 325, and asparagine 327 each contribute to the Mg(2+) site.

Belongs to the D-alanine--D-alanine ligase family. Requires Mg(2+) as cofactor. The cofactor is Mn(2+).

The protein resides in the cytoplasm. It catalyses the reaction 2 D-alanine + ATP = D-alanyl-D-alanine + ADP + phosphate + H(+). It functions in the pathway cell wall biogenesis; peptidoglycan biosynthesis. Functionally, cell wall formation. This Rhodococcus opacus (strain B4) protein is D-alanine--D-alanine ligase.